Reading from the N-terminus, the 664-residue chain is Trifunctional UDP-glucose 4,6-dehydratase/UDP-4-keto-6-deoxy-D-glucose 3,5-epimerase/UDP-4-keto-L-rhamnose-reductase RHM3 (664 aa).

13-19 is an NAD(+) binding site; that stretch reads GAAGFIA. Residue Thr-132 participates in substrate binding. Asp-133 (proton donor) is an active-site residue. Catalysis depends on proton acceptor residues Glu-134 and Tyr-159. 386 to 392 serves as a coordination point for NADP(+); the sequence is GKTGWLG.

It in the N-terminal section; belongs to the NAD(P)-dependent epimerase/dehydratase family. dTDP-glucose dehydratase subfamily. The protein in the C-terminal section; belongs to the dTDP-4-dehydrorhamnose reductase family. The cofactor is NAD(+). NADP(+) is required as a cofactor. As to expression, expressed in roots, stems, seedlings, and siliques. Lower expression in inflorescence tips, and leaves.

It catalyses the reaction UDP-alpha-D-glucose = UDP-4-dehydro-6-deoxy-alpha-D-glucose + H2O. It functions in the pathway carbohydrate biosynthesis. Trifunctional enzyme involved in UDP-beta-L-rhamnose biosynthesis, a precursor of the primary cell wall components rhamnogalacturonan I (RG-I) and rhamnogalacturonan II (RG-II). Catalyzes the dehydration of UDP-glucose to form UDP-4-dehydro-6-deoxy-D-glucose followed by the epimerization of the C3' and C5' positions of UDP-4-dehydro-6-deoxy-D-glucose to form UDP-4-keto-beta-L-rhamnose and the reduction of UDP-4-keto-beta-L-rhamnose to yield UDP-beta-L-rhamnose. In Arabidopsis thaliana (Mouse-ear cress), this protein is Trifunctional UDP-glucose 4,6-dehydratase/UDP-4-keto-6-deoxy-D-glucose 3,5-epimerase/UDP-4-keto-L-rhamnose-reductase RHM3.